The chain runs to 643 residues: Nucleolar GTP-binding protein 1 (643 aa).

The OBG-type G domain occupies 168–340 (RTLLICGYPN…VRNKACEKLL (173 aa)). GTP contacts are provided by residues 174–181 (GYPNVGKS), 220–224 (DTPGI), and 288–291 (NKTD). A disordered region spans residues 568–643 (GDQEDSAPAG…KRGVGKTDFR (76 aa)). The span at 594–622 (MRSKAERMAKLERRERNRMARAGESDRHA) shows a compositional bias: basic and acidic residues.

Belongs to the TRAFAC class OBG-HflX-like GTPase superfamily. OBG GTPase family. NOG subfamily.

The protein localises to the nucleus. Its subcellular location is the nucleolus. Its function is as follows. Involved in the biogenesis of the 60S ribosomal subunit. This chain is Nucleolar GTP-binding protein 1 (NOG1), found in Kluyveromyces lactis (strain ATCC 8585 / CBS 2359 / DSM 70799 / NBRC 1267 / NRRL Y-1140 / WM37) (Yeast).